We begin with the raw amino-acid sequence, 687 residues long: Adhesion G-protein coupled receptor G1 (687 aa).

A signal peptide spans 1–25; it reads MTAQSLLQTTLFLLSLLFLVQGAHG. 26 to 33 contributes to the heparin binding site; the sequence is RGHREDFR. The Extracellular portion of the chain corresponds to 26–402; it reads RGHREDFRFC…VEVDAVHKHY (377 aa). Intrachain disulfides connect Cys35–Cys91 and Cys121–Cys177. N-linked (GlcNAc...) asparagine glycosylation is found at Asn39, Asn148, Asn156, and Asn171. 190–200 lines the heparin pocket; sequence LKHPQKASRRP. In terms of domain architecture, GAIN-B spans 224–395; sequence DTVSFEEDRV…AVLMVSSVEV (172 aa). Asn234, Asn303, Asn324, and Asn341 each carry an N-linked (GlcNAc...) asparagine glycan. Disulfide bonds link Cys346/Cys377 and Cys366/Cys379. The GPS stretch occupies residues 346–395; the sequence is CVFWVEDPTLSNPGRWSSAGCETVRRETQTSCFCNHLTYFAVLMVSSVEV. Residues 384–397 form a stachel region; sequence YFAVLMVSSVEVDA. The helical transmembrane segment at 403 to 423 threads the bilayer; sequence LSLLSYVGCVVSALACVVTIA. The Cytoplasmic segment spans residues 424 to 442; sequence AYLCSRRKPRDYTIKVHMN. A helical membrane pass occupies residues 443–463; the sequence is LLLAVFLLDVSFLLSEPVALT. Over 464–470 the chain is Extracellular; that stretch reads GSQSGCR. The helical transmembrane segment at 471–491 threads the bilayer; it reads ASAIFLHFSLLACLSWMGLEG. Topologically, residues 492-512 are cytoplasmic; it reads YNLYRLVVEVFGTYIPGYLLK. Residues 513–533 form a helical membrane-spanning segment; the sequence is LSAMGWGFPIFLVTLVALVDV. The Extracellular segment spans residues 534–570; it reads DNYGPIILAVHRTPESVIYPSMCWIRDSLVSYITNLG. A helical membrane pass occupies residues 571 to 591; it reads LFSLVFLFNMAMLGTMVVQIL. Residues 592–603 lie on the Cytoplasmic side of the membrane; sequence RLRPHTQKWSHV. The helical transmembrane segment at 604-624 threads the bilayer; it reads LTLLGLSLVLGLPWALIFFSF. Over 625–630 the chain is Extracellular; sequence ASGTFQ. Residues 631–651 form a helical membrane-spanning segment; it reads LVVLYLFSIITSFQGFLIFLW. The Cytoplasmic portion of the chain corresponds to 652–687; sequence YWSMRLQARGGPSPLKSNSDSARLPISTGSTSSSRI. The segment at 664–687 is disordered; sequence SPLKSNSDSARLPISTGSTSSSRI. A compositionally biased stretch (polar residues) spans 666–687; the sequence is LKSNSDSARLPISTGSTSSSRI.

Belongs to the G-protein coupled receptor 2 family. LN-TM7 subfamily. Heterodimer of 2 chains generated by proteolytic processing; the large extracellular N-terminal fragment (ADGRG1 NT) and the membrane-bound C-terminal fragment (ADGRG1-CT) predominantly remain associated and non-covalently linked. ADGRG1 NT self-associates in a trans-trans manner; the homophilic interaction enhances receptor signaling. Interacts with TGM2. Interacts with heparin; leading to the reduction of ADGRG1 shedding. Interacts with COL3A1. Part of a GPCR-tetraspanin complex at least consisting of ADGRG1, CD81, eventually CD9, and GNA11 in which CD81 is enhancing the association of ADGRG1 with GNA11. In terms of processing, autoproteolytically cleaved into 2 fragments; the large extracellular N-terminal fragment (ADGRG1 NT) and the membrane-bound C-terminal fragment (ADGRG1 CT) predominantly remain associated and non-covalently linked. Shedding to yield the secreted ADGRG1 N-terminal fragment seems to involve metalloprotease(s). Post-translationally, ubiquitinated. Undergoes polyubiquitination upon activation.

It is found in the cell membrane. The protein localises to the secreted. The protein resides in the membrane raft. Forms a heterodimer of 2 chains generated by proteolytic processing that remain associated through non-covalent interactions mediated by the GAIN-B domain. In the inactivated receptor, the Stachel sequence (also named stalk) is embedded in the GAIN-B domain, where it adopts a beta-strand conformation. On activation, the Stachel moves into the 7 transmembrane region and adopts a twisted hook-shaped configuration that forms contacts within the receptor, leading to coupling of a G-alpha protein, which activates signaling. The cleaved GAIN-B and N-terminal domains can then dissociate from the rest of the receptor. Functionally, adhesion G-protein coupled receptor (aGPCR) for steroid hormone 17alpha-hydroxypregnenolone (17-OH), which is involved in cell adhesion and cell-cell interactions. Ligand binding causes a conformation change that triggers signaling via guanine nucleotide-binding proteins (G proteins) and modulates the activity of downstream effectors, such as RhoA pathway. ADGRG1 is coupled to G(12) and/or G(13) G proteins (GNA12 and GNA13, respectively) and mediates the activation Rho small GTPases. Acts as a potent suppressor of ferroptosis: binding to 17-OH-binding initiates signaling that down-regulates CD36 and alleviates ferroptosis-induced liver injury. Ligand-binding also induces cell adhesion activity via association with proteins such as collagen III/COL3A1 and TGM2. Mediates cell matrix adhesion in developing neurons and hematopoietic stem cells. Involved in cortical development, specifically in maintenance of the pial basement membrane integrity and in cortical lamination: association with COL3A1 in the developing brain inhibits neuronal migration via activation of the RhoA pathway. Together with TGM2, acts as a regulator of myelination and myelin repair in oligodendrocyte precursor cells. Acts as a hemostatic sensor of shear force: G protein-coupled receptor signaling is activated in response to shear force in platelets, promoting G(13) G protein signaling, and platelet shape change and aggregation in a COL3A1-dependent manner. Acts as an inhibitor of VEGFA production thereby inhibiting angiogenesis through a signaling pathway mediated by PRKCA. Plays a role in the maintenance of hematopoietic stem cells in bone marrow niche. Plays an essential role in testis development. This Macaca mulatta (Rhesus macaque) protein is Adhesion G-protein coupled receptor G1 (ADGRG1).